The primary structure comprises 370 residues: Pantothenate kinase 3 (370 aa).

Glu-138 functions as the Proton acceptor in the catalytic mechanism. Acetyl-CoA-binding residues include Ser-192, Ser-195, and Arg-207.

Belongs to the type II pantothenate kinase family. In terms of assembly, homodimer.

It localises to the cytoplasm. It carries out the reaction (R)-pantothenate + ATP = (R)-4'-phosphopantothenate + ADP + H(+). It participates in cofactor biosynthesis; coenzyme A biosynthesis; CoA from (R)-pantothenate: step 1/5. Subject to allosteric regulation, exists in two distinct conformational states, a catalytically incompetent (or open) conformation stabilized by the binding of acetyl(acyl)-CoA, and a catalytically competent (or closed) conformation stabilized by ATP-binding. Inhibited by acetyl-CoA and its thioesters which act as allosteric inhibitors and compete with the ATP-binding site. In terms of biological role, catalyzes the phosphorylation of pantothenate to generate 4'-phosphopantothenate in the first and rate-determining step of coenzyme A (CoA) synthesis. The protein is Pantothenate kinase 3 (PANK3) of Bos taurus (Bovine).